The primary structure comprises 83 residues: Bublin coiled-coil protein (83 aa).

A disordered region spans residues 1 to 24 (MSGPNGDLGMPVEAGAEGEEDGFG). The stretch at 25–74 (EAEYAAINSMLDQINSCLDHLEEKNDHLHARLQELLESNRQTRLEFQQQL) forms a coiled coil. S82 is subject to Phosphoserine.

The protein belongs to the UPF0184 (EST00098) family.

It is found in the cell junction. The protein localises to the cytoplasm. Its subcellular location is the cytoskeleton. Functionally, essential for intermediate filament organization in intestinal cells, interacts with intermediate filament and regulates intestinal lumen morphology. The sequence is that of Bublin coiled-coil protein from Homo sapiens (Human).